The chain runs to 356 residues: tRNA-specific 2-thiouridylase MnmA (356 aa).

ATP is bound by residues 8–15 and M34; that span reads GMSGGVDS. Catalysis depends on C103, which acts as the Nucleophile. Cysteines 103 and 199 form a disulfide. G127 contributes to the ATP binding site. The interaction with tRNA stretch occupies residues 149–151; sequence KDQ. The active-site Cysteine persulfide intermediate is the C199. The interaction with tRNA stretch occupies residues 305 to 306; the sequence is RY.

It belongs to the MnmA/TRMU family.

It localises to the cytoplasm. It catalyses the reaction S-sulfanyl-L-cysteinyl-[protein] + uridine(34) in tRNA + AH2 + ATP = 2-thiouridine(34) in tRNA + L-cysteinyl-[protein] + A + AMP + diphosphate + H(+). In terms of biological role, catalyzes the 2-thiolation of uridine at the wobble position (U34) of tRNA, leading to the formation of s(2)U34. The polypeptide is tRNA-specific 2-thiouridylase MnmA (Clostridium kluyveri (strain ATCC 8527 / DSM 555 / NBRC 12016 / NCIMB 10680 / K1)).